A 209-amino-acid chain; its full sequence is Ribonuclease HII (209 aa).

Positions 6 to 209 (SLEAGIDEAG…IKRMTNSRLF (204 aa)) constitute an RNase H type-2 domain. A divalent metal cation-binding residues include aspartate 12, glutamate 13, and aspartate 108.

The protein belongs to the RNase HII family. Mn(2+) is required as a cofactor. Mg(2+) serves as cofactor.

Its subcellular location is the cytoplasm. It catalyses the reaction Endonucleolytic cleavage to 5'-phosphomonoester.. Functionally, endonuclease that specifically degrades the RNA of RNA-DNA hybrids. In Caldivirga maquilingensis (strain ATCC 700844 / DSM 13496 / JCM 10307 / IC-167), this protein is Ribonuclease HII.